Consider the following 568-residue polypeptide: Urease subunit alpha (568 aa).

One can recognise a Urease domain in the interval 131-568 (GGIDTHIHFI…LPMAQRYFLF (438 aa)). 3 residues coordinate Ni(2+): His136, His138, and Lys219. The residue at position 219 (Lys219) is an N6-carboxylysine. Position 221 (His221) interacts with substrate. Ni(2+) is bound by residues His248 and His274. His322 (proton donor) is an active-site residue. Ni(2+) is bound at residue Asp362.

This sequence belongs to the metallo-dependent hydrolases superfamily. Urease alpha subunit family. In terms of assembly, heterotrimer of UreA (gamma), UreB (beta) and UreC (alpha) subunits. Three heterotrimers associate to form the active enzyme. It depends on Ni cation as a cofactor. In terms of processing, carboxylation allows a single lysine to coordinate two nickel ions.

It localises to the cytoplasm. The enzyme catalyses urea + 2 H2O + H(+) = hydrogencarbonate + 2 NH4(+). It functions in the pathway nitrogen metabolism; urea degradation; CO(2) and NH(3) from urea (urease route): step 1/1. The chain is Urease subunit alpha from Nostoc sp. (strain PCC 7120 / SAG 25.82 / UTEX 2576).